Consider the following 265-residue polypeptide: MTKYLFSDFDNTLRNSKVKNSLRIDQKDLDFIKEFQKNNKLIVSTGRPYKQLKEHLLNEYNLMPDYFIVNTGAMICDNKGRILYKKTIDNKIKIQLLNFLKTIVNQIDVIVFATSENESFLFHKNWSKDVEKFFFGLEKLNKTLDYLYDKDLLCLKIECSQETWNKIEDFINKNNLEVNITFNSINNRLFNEIHAFKVSKGQAIKGLQEKLDISSDDIIVAGDDYNDISMFEMFYKNSYMCKHKHNENIRNKARYLIDNIWEIKY.

This is an uncharacterized protein from Mycoplasma capricolum subsp. capricolum (strain California kid / ATCC 27343 / NCTC 10154).